A 224-amino-acid polypeptide reads, in one-letter code: Octanoyltransferase (224 aa).

Residues Ala38–Ser213 enclose the BPL/LPL catalytic domain. Substrate-binding positions include Arg77–His84, Ser144–Gly146, and Gly157–Ala159. Cys175 acts as the Acyl-thioester intermediate in catalysis.

This sequence belongs to the LipB family.

It is found in the cytoplasm. The catalysed reaction is octanoyl-[ACP] + L-lysyl-[protein] = N(6)-octanoyl-L-lysyl-[protein] + holo-[ACP] + H(+). It functions in the pathway protein modification; protein lipoylation via endogenous pathway; protein N(6)-(lipoyl)lysine from octanoyl-[acyl-carrier-protein]: step 1/2. In terms of biological role, catalyzes the transfer of endogenously produced octanoic acid from octanoyl-acyl-carrier-protein onto the lipoyl domains of lipoate-dependent enzymes. Lipoyl-ACP can also act as a substrate although octanoyl-ACP is likely to be the physiological substrate. The protein is Octanoyltransferase of Hahella chejuensis (strain KCTC 2396).